We begin with the raw amino-acid sequence, 353 residues long: S-adenosylmethionine:tRNA ribosyltransferase-isomerase (353 aa).

It belongs to the QueA family. As to quaternary structure, monomer.

The protein resides in the cytoplasm. It catalyses the reaction 7-aminomethyl-7-carbaguanosine(34) in tRNA + S-adenosyl-L-methionine = epoxyqueuosine(34) in tRNA + adenine + L-methionine + 2 H(+). The protein operates within tRNA modification; tRNA-queuosine biosynthesis. In terms of biological role, transfers and isomerizes the ribose moiety from AdoMet to the 7-aminomethyl group of 7-deazaguanine (preQ1-tRNA) to give epoxyqueuosine (oQ-tRNA). In Paraburkholderia phymatum (strain DSM 17167 / CIP 108236 / LMG 21445 / STM815) (Burkholderia phymatum), this protein is S-adenosylmethionine:tRNA ribosyltransferase-isomerase.